A 299-amino-acid chain; its full sequence is 33 kDa chaperonin (299 aa).

2 cysteine pairs are disulfide-bonded: Cys-240/Cys-242 and Cys-273/Cys-276.

This sequence belongs to the HSP33 family. Under oxidizing conditions two disulfide bonds are formed involving the reactive cysteines. Under reducing conditions zinc is bound to the reactive cysteines and the protein is inactive.

The protein localises to the cytoplasm. Its function is as follows. Redox regulated molecular chaperone. Protects both thermally unfolding and oxidatively damaged proteins from irreversible aggregation. Plays an important role in the bacterial defense system toward oxidative stress. This is 33 kDa chaperonin from Gloeothece citriformis (strain PCC 7424) (Cyanothece sp. (strain PCC 7424)).